We begin with the raw amino-acid sequence, 246 residues long: LexA repressor (246 aa).

Positions 1-34 (MATPQTGKKTPSRRVSELPDGPPDATGLTPRQQR) are disordered. A DNA-binding region (H-T-H motif) is located at residues 52 to 72 (MREIGEAVGLTSSSSVAHQLK). Residues Ser-170 and Lys-207 each act as for autocatalytic cleavage activity in the active site.

This sequence belongs to the peptidase S24 family. In terms of assembly, homodimer.

The enzyme catalyses Hydrolysis of Ala-|-Gly bond in repressor LexA.. Its function is as follows. Represses a number of genes involved in the response to DNA damage (SOS response), including recA and lexA. In the presence of single-stranded DNA, RecA interacts with LexA causing an autocatalytic cleavage which disrupts the DNA-binding part of LexA, leading to derepression of the SOS regulon and eventually DNA repair. The sequence is that of LexA repressor from Nocardioides sp. (strain ATCC BAA-499 / JS614).